A 422-amino-acid chain; its full sequence is Enolase (422 aa).

Gln161 contacts (2R)-2-phosphoglycerate. Residue Glu203 is the Proton donor of the active site. The Mg(2+) site is built by Asp240, Glu283, and Asp310. (2R)-2-phosphoglycerate-binding residues include Lys335, Arg364, Ser365, and Lys386. The active-site Proton acceptor is the Lys335.

It belongs to the enolase family. Mg(2+) is required as a cofactor.

It localises to the cytoplasm. It is found in the secreted. The protein localises to the cell surface. The catalysed reaction is (2R)-2-phosphoglycerate = phosphoenolpyruvate + H2O. It functions in the pathway carbohydrate degradation; glycolysis; pyruvate from D-glyceraldehyde 3-phosphate: step 4/5. Functionally, catalyzes the reversible conversion of 2-phosphoglycerate (2-PG) into phosphoenolpyruvate (PEP). It is essential for the degradation of carbohydrates via glycolysis. The sequence is that of Enolase from Deinococcus deserti (strain DSM 17065 / CIP 109153 / LMG 22923 / VCD115).